We begin with the raw amino-acid sequence, 162 residues long: MLTIKDGTLLIHLLLFSVVALVQLQGAKSARAKNPSKMESKTGENQDRPVLLGGWEDRDPKDEEILELLPSILMKVNEQSNDEYHLMPIKLLKVSSQVVAGVKYKMDVQVARSQCKKSSNEKVDLTKCKKLEGHPEKVMTLEVWEKPWENFMRVEILGTKEV.

The first 32 residues, 1-32, serve as a signal peptide directing secretion; the sequence is MLTIKDGTLLIHLLLFSVVALVQLQGAKSARA. The segment at 30 to 54 is disordered; the sequence is ARAKNPSKMESKTGENQDRPVLLGG. Residues 36–47 are compositionally biased toward basic and acidic residues; sequence SKMESKTGENQD. Positions 97–101 match the Secondary area of contact motif; it reads QVVAG. A disulfide bond links Cys115 and Cys128.

It belongs to the cystatin family. In terms of tissue distribution, expressed in the cuticle of L3 and L4 larvae, female adult, and in the eggshell of developing microfilariae.

In terms of biological role, cysteine protease inhibitor which inhibits members of the peptidase C1 family. In the human host, inhibits CTSL/cathepsin L and CTSS/cathepsin S and to a lesser extent CTSB/cathepsin B which may cause defects in antigen processing and thereby impair antigen-driven T cell proliferation. The protein is Onchocystatin of Onchocerca volvulus.